Consider the following 788-residue polypeptide: Endonuclease MutS2 (788 aa).

332–339 provides a ligand contact to ATP; sequence GPNTGGKT. The Smr domain occupies 713-788; the sequence is VDLRGMDAEE…GTGVTVVELK (76 aa).

It belongs to the DNA mismatch repair MutS family. MutS2 subfamily. Homodimer. Binds to stalled ribosomes, contacting rRNA.

Functionally, endonuclease that is involved in the suppression of homologous recombination and thus may have a key role in the control of bacterial genetic diversity. In terms of biological role, acts as a ribosome collision sensor, splitting the ribosome into its 2 subunits. Detects stalled/collided 70S ribosomes which it binds and splits by an ATP-hydrolysis driven conformational change. Acts upstream of the ribosome quality control system (RQC), a ribosome-associated complex that mediates the extraction of incompletely synthesized nascent chains from stalled ribosomes and their subsequent degradation. Probably generates substrates for RQC. The chain is Endonuclease MutS2 from Clostridium botulinum (strain Langeland / NCTC 10281 / Type F).